Reading from the N-terminus, the 96-residue chain is Protein Vpr (96 aa).

Residues 1–42 are homooligomerization; the sequence is MEQAPEDQGPQREPYNEWTLELLEELKSEAVRHFPRIWLHSL. 3 positions are modified to phosphoserine; by host: Ser79, Ser94, and Ser96.

Belongs to the HIV-1 VPR protein family. In terms of assembly, homooligomer, may form homodimer. Interacts with p6-gag region of the Pr55 Gag precursor protein through a (Leu-X-X)4 motif near the C-terminus of the P6gag protein. Interacts with host UNG. May interact with host RAD23A/HHR23A. Interacts with host VPRBP/DCAF1, leading to hijack the CUL4A-RBX1-DDB1-DCAF1/VPRBP complex, mediating ubiquitination of host proteins such as TERT and ZGPAT and arrest of the cell cycle in G2 phase. Post-translationally, phosphorylated on several residues by host. These phosphorylations regulate VPR activity for the nuclear import of the HIV-1 pre-integration complex.

The protein resides in the virion. It localises to the host nucleus. It is found in the host extracellular space. Functionally, during virus replication, may deplete host UNG protein, and incude G2-M cell cycle arrest. Acts by targeting specific host proteins for degradation by the 26S proteasome, through association with the cellular CUL4A-DDB1 E3 ligase complex by direct interaction with host VPRPB/DCAF-1. Cell cycle arrest reportedly occurs within hours of infection and is not blocked by antiviral agents, suggesting that it is initiated by the VPR carried into the virion. Additionally, VPR induces apoptosis in a cell cycle dependent manner suggesting that these two effects are mechanistically linked. Detected in the serum and cerebrospinal fluid of AIDS patient, VPR may also induce cell death to bystander cells. During virus entry, plays a role in the transport of the viral pre-integration (PIC) complex to the host nucleus. This function is crucial for viral infection of non-dividing macrophages. May act directly at the nuclear pore complex, by binding nucleoporins phenylalanine-glycine (FG)-repeat regions. This is Protein Vpr from Homo sapiens (Human).